A 1360-amino-acid polypeptide reads, in one-letter code: Activating molecule in BECN1-regulated autophagy protein 1B (1360 aa).

3 WD repeats span residues 50–89, 92–132, and 134–174; these read DNPR…CLHS, GHRR…ESWF, and ESNV…AVVK. Residues 249–258 show a composition bias toward polar residues; that stretch reads RSSGAQANDQ. Disordered regions lie at residues 249 to 277, 315 to 364, 412 to 490, 514 to 573, 587 to 616, 664 to 688, and 754 to 796; these read RSSG…FQYP, PTGL…NSAH, GVET…QRNN, ELER…RCRS, WERS…EDPG, PTVS…NPDE, and TLSN…MPRN. Low complexity predominate over residues 319–333; sequence QPSDSTQPQTQSGPS. Residues 350-361 show a composition bias toward polar residues; it reads AFSSVFSGTAGN. The span at 428–437 shows a compositional bias: low complexity; that stretch reads SSSSMDLLSL. 2 stretches are compositionally biased toward polar residues: residues 443 to 454 and 473 to 490; these read GSSSSPIYTSAT and DGTS…QRNN. The segment covering 590 to 607 has biased composition (low complexity); sequence SGQTSSSSSSQEGPSWPL. Residues 754-768 show a composition bias toward polar residues; it reads TLSNSQADSQSNNPS. The span at 775-784 shows a compositional bias: acidic residues; sequence SDGDYEDIEE. 2 short sequence motifs (TQT motif) span residues 1109–1111 and 1121–1123; these read TQT. Disordered stretches follow at residues 1120–1142 and 1241–1360; these read ETQT…TSRH and SQTS…LYGR. Composition is skewed to polar residues over residues 1129–1142 and 1241–1252; these read SAST…TSRH and SQTSVRTAQGGN. Residues 1278 to 1288 are compositionally biased toward low complexity; sequence APGPSGSSGAP. The segment covering 1311-1321 has biased composition (basic and acidic residues); sequence FGDRQPDDVQR. The span at 1329-1347 shows a compositional bias: low complexity; the sequence is NMSNHSNNNNNDHSNSYSE. Basic and acidic residues predominate over residues 1348-1360; the sequence is SRSRDYPDDLYGR.

It belongs to the WD repeat AMBRA1 family. In terms of assembly, component of the DCX(AMBRA1) E3 ubiquitin ligase complex.

The protein resides in the endoplasmic reticulum. It is found in the cytoplasm. The protein localises to the cytoskeleton. Its subcellular location is the cytoplasmic vesicle. It localises to the autophagosome. The protein resides in the mitochondrion. It is found in the cytosol. The protein localises to the nucleus. Its subcellular location is the cell junction. It localises to the focal adhesion. It participates in protein modification; protein ubiquitination. Functionally, substrate-recognition component of a DCX (DDB1-CUL4-X-box) E3 ubiquitin-protein ligase complex involved in cell cycle control and autophagy. The DCX(AMBRA1) complex specifically mediates the polyubiquitination of target proteins. Acts as an upstream master regulator of the transition from G1 to S cell phase: ambra1b specifically recognizes and binds phosphorylated cyclin-D (ccnd1, ccnd2 and ccnd3), leading to cyclin-D ubiquitination by the DCX(AMBRA1) complex and subsequent degradation. Acts as a regulator of Cul5-RING (CRL5) E3 ubiquitin-protein ligase complexes by mediating ubiquitination and degradation of Elongin-C (eloc) component of CRL5 complexes. Acts as a key regulator of autophagy by modulating the BECN1-PIK3C3 complex: controls protein turnover during neuronal development, and regulates normal cell survival and proliferation. In normal conditions, ambra1b is tethered to the cytoskeleton via interaction with dyneins light chains. Upon autophagy induction, ambra1b is released from the cytoskeletal docking site to induce autophagosome nucleation by mediating ubiquitination of proteins involved in autophagy. Also acts as an activator of mitophagy. Required for skeletal muscle development. The polypeptide is Activating molecule in BECN1-regulated autophagy protein 1B (Danio rerio (Zebrafish)).